Consider the following 676-residue polypeptide: Probable potassium transport system protein Kup (676 aa).

12 helical membrane-spanning segments follow: residues G14 to M34, I56 to L76, A97 to L117, V142 to I162, A173 to I193, A219 to S239, S252 to L272, L296 to G316, I345 to F365, G376 to L396, L402 to S422, and G429 to F449.

Belongs to the HAK/KUP transporter (TC 2.A.72) family.

The protein localises to the cell membrane. It carries out the reaction K(+)(in) + H(+)(in) = K(+)(out) + H(+)(out). Functionally, transport of potassium into the cell. Likely operates as a K(+):H(+) symporter. The chain is Probable potassium transport system protein Kup from Lactobacillus delbrueckii subsp. bulgaricus (strain ATCC BAA-365 / Lb-18).